The following is a 366-amino-acid chain: 8-hydroxyquercetin 8-O-methyltransferase (366 aa).

Residues 207–210 (VGGG), 231–232 (DL), 251–252 (DM), and lysine 265 each bind S-adenosyl-L-methionine. Histidine 269 functions as the Proton acceptor in the catalytic mechanism.

It belongs to the class I-like SAM-binding methyltransferase superfamily. Cation-independent O-methyltransferase family. COMT subfamily. As to quaternary structure, homodimer.

The enzyme catalyses 3,3',4',5,7,8-hexahydroxyflavone + S-adenosyl-L-methionine = 3,3',4',5,7-pentahydroxy-8-methoxyflavone + S-adenosyl-L-homocysteine + H(+). It catalyses the reaction 4',7,8-trihydroxyflavone + S-adenosyl-L-methionine = 4',7-dihydroxy-8-methoxyflavone + S-adenosyl-L-homocysteine + H(+). The catalysed reaction is 8-hydroxy-7-methoxyflavone + S-adenosyl-L-methionine = 7,8-dimethoxyflavone + S-adenosyl-L-homocysteine + H(+). It functions in the pathway flavonoid metabolism. In terms of biological role, flavonoid 8-O-methyltransferase involved in the biosynthesis of polymethoxylated flavonoids natural products such as pebrellin, aroma compounds which contribute to the flavor of peppermint, and exhibit pharmacological activities such as anti-allergic, anti-oxidant, antibacterial, anti-proliferative, and anti-inflammatory effects. Catalyzes S-adenosylmethionine-dependent regioselective 8-O-methylation of flavonoids; active on various hydroxylated flavonoid substrates, including 7,8,3'4'-tetrahydroxy-flavone, 7,8,4'-trihydroxy-flavone and 8-hydroxy-flavone 7-methyl ether. This Mentha piperita (Peppermint) protein is 8-hydroxyquercetin 8-O-methyltransferase.